Consider the following 437-residue polypeptide: Cysteine--tRNA ligase (437 aa).

Cys-31 contributes to the Zn(2+) binding site. A 'HIGH' region motif is present at residues 33 to 43 (PTVYNDLHLGN). Residues Cys-205, His-230, and Glu-234 each contribute to the Zn(2+) site. The 'KMSKS' region motif lies at 262–266 (KMSKS). ATP is bound at residue Lys-265.

The protein belongs to the class-I aminoacyl-tRNA synthetase family. As to quaternary structure, monomer. Zn(2+) serves as cofactor.

It is found in the cytoplasm. The catalysed reaction is tRNA(Cys) + L-cysteine + ATP = L-cysteinyl-tRNA(Cys) + AMP + diphosphate. The chain is Cysteine--tRNA ligase (cysS) from Mycoplasma pneumoniae (strain ATCC 29342 / M129 / Subtype 1) (Mycoplasmoides pneumoniae).